The primary structure comprises 95 residues: Acylphosphatase (95 aa).

An Acylphosphatase-like domain is found at 9–95 (RLTAWVHGRV…KGGLTGFVER (87 aa)). Active-site residues include arginine 24 and asparagine 42.

Belongs to the acylphosphatase family.

The catalysed reaction is an acyl phosphate + H2O = a carboxylate + phosphate + H(+). This chain is Acylphosphatase (acyP), found in Saccharopolyspora erythraea (strain ATCC 11635 / DSM 40517 / JCM 4748 / NBRC 13426 / NCIMB 8594 / NRRL 2338).